Consider the following 719-residue polypeptide: Glutathionylspermidine synthase (719 aa).

The Peptidase C51 domain occupies 54–200; sequence CLPLSSFERK…TESGEVELLD (147 aa). Arg350 serves as a coordination point for glutathione. Position 350–352 (350–352) interacts with ATP; the sequence is RFD. Residues Asp352, Glu364, and Asn366 each coordinate Mg(2+). Position 369 (Ser369) interacts with glutathione. A spermidine-binding site is contributed by Glu432. Positions 433 and 501 each coordinate glutathione. Residues Lys544, Lys579, Gly586, Gln653, and 689–691 each bind ATP; that span reads KIT.

The protein in the C-terminal section; belongs to the glutathionylspermidine synthase preATP-grasp family. Mg(2+) is required as a cofactor. In terms of processing, the N-terminus is blocked.

The catalysed reaction is spermidine + glutathione + ATP = glutathionylspermidine + ADP + phosphate + H(+). Its function is as follows. Conjugates glutathione (gamma-Glu-Cys-Gly) and spermidine to form glutathionylspermidine in the biosynthesis trypanothione (N(1),N(8)-bis(glutathionyl)spermidine), which is involved in maintaining intracellular thiol redox and in defense against oxidants. The sequence is that of Glutathionylspermidine synthase (GSP) from Crithidia fasciculata.